Here is a 473-residue protein sequence, read N- to C-terminus: Serine carboxypeptidase-like 42 (473 aa).

The N-terminal stretch at 1–26 (MASVSWRAVAVAMVVVLLSLQWFAKG) is a signal peptide. 3 cysteine pairs are disulfide-bonded: Cys87-Cys346, Cys247-Cys264, and Cys289-Cys314. Asn138 is a glycosylation site (N-linked (GlcNAc...) asparagine). The active site involves Ser179. Asn259 is a glycosylation site (N-linked (GlcNAc...) asparagine). N-linked (GlcNAc...) asparagine glycosylation is found at Asn335 and Asn351. Catalysis depends on residues Asp383 and His440. N-linked (GlcNAc...) asparagine glycosylation occurs at Asn465.

This sequence belongs to the peptidase S10 family. In terms of tissue distribution, expression not detected.

The protein resides in the secreted. In terms of biological role, probable carboxypeptidase. This Arabidopsis thaliana (Mouse-ear cress) protein is Serine carboxypeptidase-like 42 (SCPL42).